Reading from the N-terminus, the 343-residue chain is Acetylglutamate kinase (343 aa).

Residues 98 to 99 (GG), R120, and N219 each bind substrate.

It belongs to the acetylglutamate kinase family. ArgB subfamily.

It localises to the cytoplasm. It carries out the reaction N-acetyl-L-glutamate + ATP = N-acetyl-L-glutamyl 5-phosphate + ADP. It functions in the pathway amino-acid biosynthesis; L-arginine biosynthesis; N(2)-acetyl-L-ornithine from L-glutamate: step 2/4. In terms of biological role, catalyzes the ATP-dependent phosphorylation of N-acetyl-L-glutamate. In Frankia alni (strain DSM 45986 / CECT 9034 / ACN14a), this protein is Acetylglutamate kinase.